Consider the following 262-residue polypeptide: Proteasome subunit alpha (262 aa).

The interval 235 to 262 (LLPTTGESDAGDSGADGSPSGDSPDTSA) is disordered.

It belongs to the peptidase T1A family. As to quaternary structure, the 20S proteasome core is composed of 14 alpha and 14 beta subunits that assemble into four stacked heptameric rings, resulting in a barrel-shaped structure. The two inner rings, each composed of seven catalytic beta subunits, are sandwiched by two outer rings, each composed of seven alpha subunits. The catalytic chamber with the active sites is on the inside of the barrel. Has a gated structure, the ends of the cylinder being occluded by the N-termini of the alpha-subunits. Is capped by the proteasome-associated ATPase, ARC.

Its subcellular location is the cytoplasm. It functions in the pathway protein degradation; proteasomal Pup-dependent pathway. Its activity is regulated as follows. The formation of the proteasomal ATPase ARC-20S proteasome complex, likely via the docking of the C-termini of ARC into the intersubunit pockets in the alpha-rings, may trigger opening of the gate for substrate entry. Interconversion between the open-gate and close-gate conformations leads to a dynamic regulation of the 20S proteasome proteolysis activity. In terms of biological role, component of the proteasome core, a large protease complex with broad specificity involved in protein degradation. The polypeptide is Proteasome subunit alpha (Gordonia bronchialis (strain ATCC 25592 / DSM 43247 / BCRC 13721 / JCM 3198 / KCTC 3076 / NBRC 16047 / NCTC 10667) (Rhodococcus bronchialis)).